Here is a 469-residue protein sequence, read N- to C-terminus: Beta-1,3-xylanase (469 aa).

A signal peptide spans 1 to 22 (MKKLAKMISIATLGACAFSAHA). A GH26 domain is found at 23-293 (LDGKLVPNEG…LKGFTYINAD (271 aa)). Glu138 acts as the Proton donor in catalysis. Catalysis depends on Glu234, which acts as the Nucleophile. Residues 352 to 374 (DNGGDNGGDNGGDNGGDNGGDNG) show a composition bias toward gly residues. Residues 352–380 (DNGGDNGGDNGGDNGGDNGGDNGGTEPPE) are disordered. The carbohydrate binding module (CBM) stretch occupies residues 377–469 (EPPENCQDDF…NITFTTQVCN (93 aa)). Disulfide bonds link Cys382/Cys468 and Cys413/Cys418.

Belongs to the glycosyl hydrolase 26 family.

The enzyme catalyses Random hydrolysis of (1-&gt;3)-beta-D-glycosidic linkages in (1-&gt;3)-beta-D-xylans.. With respect to regulation, completely inhibited by CuCl(2), FeCl(3), HgCl(2) and N-bromosuccinimide. Moderately inhibited by AgCl, AlCl(3), Pb(CH(3)COO)(2) and dithiothreitol. BaCl(2), CaCl(2), KCl, MgCl(2), MnCl(2), NaCl, ZnCl(2), ethylenediaminetetraacetic acid, N-ethylmaleimide, iodoacetic acid and p-chloromercuribenzoic acid have little or no effect on activity. Its function is as follows. Catalyzes the hydrolysis of beta-1,3-xylan into oligosaccharides, mainly xylotriose and xylobiose with smaller amounts of xylotetraose, xylose, xylopentaose and xylohexaose. Does not hydrolyze xylobiose, p-nitrophenyl-beta-xyloside, beta-1,4-xylan, carboxymethylcellulose, curdlan, glucomannan or beta-1,4-mannan. In Alcaligenes sp, this protein is Beta-1,3-xylanase.